Reading from the N-terminus, the 85-residue chain is Small ribosomal subunit protein bS18 (85 aa).

The protein belongs to the bacterial ribosomal protein bS18 family. In terms of assembly, part of the 30S ribosomal subunit. Forms a tight heterodimer with protein bS6.

Functionally, binds as a heterodimer with protein bS6 to the central domain of the 16S rRNA, where it helps stabilize the platform of the 30S subunit. This chain is Small ribosomal subunit protein bS18, found in Helicobacter pylori (strain P12).